The chain runs to 89 residues: Small ribosomal subunit protein uS15 (89 aa).

This sequence belongs to the universal ribosomal protein uS15 family. Part of the 30S ribosomal subunit. Forms a bridge to the 50S subunit in the 70S ribosome, contacting the 23S rRNA.

In terms of biological role, one of the primary rRNA binding proteins, it binds directly to 16S rRNA where it helps nucleate assembly of the platform of the 30S subunit by binding and bridging several RNA helices of the 16S rRNA. Functionally, forms an intersubunit bridge (bridge B4) with the 23S rRNA of the 50S subunit in the ribosome. The protein is Small ribosomal subunit protein uS15 of Orientia tsutsugamushi (strain Boryong) (Rickettsia tsutsugamushi).